A 263-amino-acid polypeptide reads, in one-letter code: Ribosome maturation factor RimP (263 aa).

Residues 192 to 263 are disordered; sequence EREMKRDLGI…RGEIDPIEGE (72 aa). Over residues 217–231 the composition is skewed to basic residues; sequence PARRNAPKPKLKSTA. Over residues 232-257 the composition is skewed to basic and acidic residues; the sequence is KAHEKKPPKNTKEHRLAAERLRRGEI.

Belongs to the RimP family.

The protein localises to the cytoplasm. Functionally, required for maturation of 30S ribosomal subunits. This Nitrobacter hamburgensis (strain DSM 10229 / NCIMB 13809 / X14) protein is Ribosome maturation factor RimP.